The primary structure comprises 401 residues: Formate-dependent phosphoribosylglycinamide formyltransferase (401 aa).

Residues Glu27–Leu28 and Glu87 each bind N(1)-(5-phospho-beta-D-ribosyl)glycinamide. Residues Arg119, Lys160, Ser165 to Gln170, Glu200 to Val203, and Glu208 each bind ATP. The 190-residue stretch at Glu124–Leu313 folds into the ATP-grasp domain. 2 residues coordinate Mg(2+): Glu272 and Glu284. N(1)-(5-phospho-beta-D-ribosyl)glycinamide is bound by residues Asp291, Lys361, and Arg368–Arg369.

This sequence belongs to the PurK/PurT family. Homodimer.

The enzyme catalyses N(1)-(5-phospho-beta-D-ribosyl)glycinamide + formate + ATP = N(2)-formyl-N(1)-(5-phospho-beta-D-ribosyl)glycinamide + ADP + phosphate + H(+). It participates in purine metabolism; IMP biosynthesis via de novo pathway; N(2)-formyl-N(1)-(5-phospho-D-ribosyl)glycinamide from N(1)-(5-phospho-D-ribosyl)glycinamide (formate route): step 1/1. Involved in the de novo purine biosynthesis. Catalyzes the transfer of formate to 5-phospho-ribosyl-glycinamide (GAR), producing 5-phospho-ribosyl-N-formylglycinamide (FGAR). Formate is provided by PurU via hydrolysis of 10-formyl-tetrahydrofolate. This Haloquadratum walsbyi (strain DSM 16790 / HBSQ001) protein is Formate-dependent phosphoribosylglycinamide formyltransferase.